The following is a 250-amino-acid chain: Phosphoribosylaminoimidazole-succinocarboxamide synthase (250 aa).

Belongs to the SAICAR synthetase family.

It catalyses the reaction 5-amino-1-(5-phospho-D-ribosyl)imidazole-4-carboxylate + L-aspartate + ATP = (2S)-2-[5-amino-1-(5-phospho-beta-D-ribosyl)imidazole-4-carboxamido]succinate + ADP + phosphate + 2 H(+). It functions in the pathway purine metabolism; IMP biosynthesis via de novo pathway; 5-amino-1-(5-phospho-D-ribosyl)imidazole-4-carboxamide from 5-amino-1-(5-phospho-D-ribosyl)imidazole-4-carboxylate: step 1/2. The chain is Phosphoribosylaminoimidazole-succinocarboxamide synthase from Bifidobacterium adolescentis (strain ATCC 15703 / DSM 20083 / NCTC 11814 / E194a).